The following is a 131-amino-acid chain: Auxin-responsive protein SAUR77 (131 aa).

Belongs to the ARG7 family.

May be involved in the regulation of ethylene receptor signaling. Promotes cell expansion and plant growth. This Arabidopsis thaliana (Mouse-ear cress) protein is Auxin-responsive protein SAUR77.